The chain runs to 412 residues: FAD-dependent monooxygenase nscC (412 aa).

An N-terminal signal peptide occupies residues 1-21 (MAKPQATVLIIGAGISGLTTS). FAD is bound by residues E35 and A46. N-linked (GlcNAc...) asparagine glycosylation is present at N92. R119 is a binding site for FAD. Residues N170 and N231 are each glycosylated (N-linked (GlcNAc...) asparagine). Positions 326 and 339 each coordinate FAD.

This sequence belongs to the paxM FAD-dependent monooxygenase family. The cofactor is FAD.

Its pathway is secondary metabolite biosynthesis. Functionally, FAD-dependent monooxygenase; part of the gene cluster that mediates the biosynthesis of neosartoricin B, a prenylated anthracenone that probably exhibits T-cell antiproliferative activity, suggestive of a physiological role as an immunosuppressive agent. The non-reducing polyketide synthase nscA probably synthesizes and cyclizes the decaketide backbone. The hydrolase nscB then mediates the product release through hydrolysis followed by spontaneous decarboxylation. The prenyltransferase nscD catalyzes the addition of the dimethylallyl group to the aromatic C5. The FAD-dependent monooxygenase nscC is then responsible for the stereospecific hydroxylation at C2. Neosartoricin B can be converted into two additional compounds neosartoricins C and D. Neosartoricin C is a spirocyclic compound that is cyclized through the attack of C3 hydroxyl on C14, followed by dehydration. On the other hand, neosartoricin D is a further cyclized compound in which attack of C2 on C14 in neosartoricin C results in the formation of the acetal-containing dioxabicyclo-octanone ring. Both of these compounds are novel and possibly represent related metabolites of the gene cluster. The polypeptide is FAD-dependent monooxygenase nscC (Arthroderma otae (strain ATCC MYA-4605 / CBS 113480) (Microsporum canis)).